The sequence spans 1976 residues: Protein TIC 214 (1976 aa).

Transmembrane regions (helical) follow at residues 11–31 (LLLL…YYGF), 64–84 (FIMG…HLAL), 87–107 (PHTL…FFWN), 126–146 (LSIQ…HFVL), 173–193 (FFGW…VLSW), and 221–241 (IFSI…PSPI). Residues 619–635 (FEEEEEEEEEDDQEEST) show a composition bias toward acidic residues. 2 disordered regions span residues 619–642 (FEEE…GIRS) and 830–861 (SSYV…EDKR). Over residues 836–861 (GAKEKEKIEEEHEEEKGEYKRKEDKR) the composition is skewed to basic and acidic residues. A run of 2 helical transmembrane segments spans residues 1054-1074 (IIKI…FFVL) and 1202-1222 (IYMS…QFFL). Residues 1633-1665 (QKERFHPKPKVESNQKGYLELENRNRDEKERQH) are compositionally biased toward basic and acidic residues. The disordered stretch occupies residues 1633 to 1669 (QKERFHPKPKVESNQKGYLELENRNRDEKERQHQGNL).

Belongs to the TIC214 family. In terms of assembly, part of the Tic complex.

The protein localises to the plastid. The protein resides in the chloroplast inner membrane. Functionally, involved in protein precursor import into chloroplasts. May be part of an intermediate translocation complex acting as a protein-conducting channel at the inner envelope. This Nymphaea alba (White water-lily) protein is Protein TIC 214.